The following is a 1150-amino-acid chain: MSLVQGHGTSGLFTEPPNPINQQESSGPSLPAQDAAQAFASSPRAGATSTIVNPPKRKYKGAVVVQRATLSISAVLDNGQCVEIKYHSNLASALTNLCNTNLYDLPACLNRPITAHNLPALIEEAAAPYSLICYYQRGTVRRVEFQAEVPLLSFPLKFLVKQGKVFLIKDISQMQKCEFCGSFFKVTHTCALRRRDFYFHHVAAHSADWWEKISFTPIGAPPNTERLFIVYDVETYTWHGKFGKQLVPFMLVFQLLGDDHLVNVAKTLATEQNWEIWNGKEQDTLYYCITPEKRAIGVKFKKFRDTLQQHIAASLWSHVICQNPQLQEKATTLGLESPEELTPDQLKKFKLKGNPRFIEVYAVGHNITGFDEILLAAQVVSTRAEIPPVFEICRNFMPRAGRLLFNDITYSLPNPSYVPAKSYEHWEQGQVLASDLKSQYIKFMVRDTFSLTHTSLKNAAKAYSLTVSKGCCPYQAVNEFYMLGSYQQDADGFPDLKYWKDQEEYSFNKDLWIKEKKGAYDIIQQTLDYCALDVQVTAQLVNKLIESYQIFIKNSVNLPETSFNVFQRPTISSNSHAIFKQILYKAEKPNTHHLSTILMAPSNEMYEYVRLSIRGGRCYPTYIGVLQEPVFVYDICGMYASALTHPFPAGSPLNPYERALAIKAYEQKMLNHKTISYFDKDLLPGIFTIDADPPAEEFLDVLPPFCSRKGGRLCWTNEPLRGEIATSIDVITLHNRGWKVTLIPDTRTTVFPEWKCLAREYVQLNISAKEEADKSKNQTMRSIAKLLSNALYGSFATKLDNKKTVFSDQIESNIAKEIASGAYVVKSSSYIETDNLCAEIMPEFVVAYPPVNSDVRQLAPPSCSEEDPTKDPLAEAPFMHNFSMTSYHYKPIMFIDAEDDDFCLHTLEKSTPLIANNRYPSQIASFVLAWTRAFVSEWSQFLYENDAGTPLENRVLKSVYGDTDSLFTTMEGYKLMEEKGKKRLKKNGGKLVFDPSNPELTWLVECETQCEKCGSDAYSSESVYLAPKLYALKDTTCPKCHHVGKGKLRAKGHATSTLSYDVLKACYYADMQQGSDVFKTSRMSLRRTLTSVQAHVQPFTVTETTLTRKLRPWKDKTLHALDMHRLIPYSRKHPNPRNTETTWMELQWMT.

The disordered stretch occupies residues 1 to 53; sequence MSLVQGHGTSGLFTEPPNPINQQESSGPSLPAQDAAQAFASSPRAGATSTIVN.

It belongs to the DNA polymerase type-B family. In terms of assembly, heterodimer with the terminal protein; this heterodimer binds to bp 9 to 18 of the genome. Forms a complex with viral pTP, DBP and hosts NFIA and POU2F1/OCT1 for initiation of replication.

The protein resides in the host nucleus. The enzyme catalyses DNA(n) + a 2'-deoxyribonucleoside 5'-triphosphate = DNA(n+1) + diphosphate. Its function is as follows. Eukaryotic-type DNA polymerase involved in viral genomic replication. DNA synthesis is protein primed, and acts in a strand displacement replication. Assembles in complex with viral pTP, DBP, host NFIA and host POU2F1/OCT1 on viral origin of replication. The polymerase covalently transfers dCMP onto pTP, thereby initiating complementary strand synthesis. This chain is DNA polymerase, found in Canis lupus familiaris (Dog).